A 38-amino-acid chain; its full sequence is MSGPNPNKQPVELNRTSLFWGLLLIFILAVLFSSYFFN.

The chain crosses the membrane as a helical span at residues 17–37; sequence SLFWGLLLIFILAVLFSSYFF.

The protein belongs to the PsbL family. PSII is composed of 1 copy each of membrane proteins PsbA, PsbB, PsbC, PsbD, PsbE, PsbF, PsbH, PsbI, PsbJ, PsbK, PsbL, PsbM, PsbT, PsbX, PsbY, PsbZ, Psb30/Ycf12, at least 3 peripheral proteins of the oxygen-evolving complex and a large number of cofactors. It forms dimeric complexes.

The protein localises to the plastid. It is found in the chloroplast thylakoid membrane. Its function is as follows. One of the components of the core complex of photosystem II (PSII). PSII is a light-driven water:plastoquinone oxidoreductase that uses light energy to abstract electrons from H(2)O, generating O(2) and a proton gradient subsequently used for ATP formation. It consists of a core antenna complex that captures photons, and an electron transfer chain that converts photonic excitation into a charge separation. This subunit is found at the monomer-monomer interface and is required for correct PSII assembly and/or dimerization. The chain is Photosystem II reaction center protein L from Guillardia theta (Cryptophyte).